Consider the following 119-residue polypeptide: Fluoride-specific ion channel FluC (119 aa).

4 helical membrane-spanning segments follow: residues 5 to 25, 30 to 50, 59 to 79, and 92 to 112; these read ILPL…LNLA, LSPA…IGIF, WKLL…GFSL, and SALA…WLGL. Na(+)-binding residues include Gly69 and Thr72.

The protein belongs to the fluoride channel Fluc/FEX (TC 1.A.43) family.

The protein localises to the cell inner membrane. The enzyme catalyses fluoride(in) = fluoride(out). Its activity is regulated as follows. Na(+) is not transported, but it plays an essential structural role and its presence is essential for fluoride channel function. Its function is as follows. Fluoride-specific ion channel. Important for reducing fluoride concentration in the cell, thus reducing its toxicity. The polypeptide is Fluoride-specific ion channel FluC (Neisseria gonorrhoeae (strain NCCP11945)).